Consider the following 226-residue polypeptide: Chalcone--flavanone isomerase 2-A (226 aa).

The substrate site is built by Thr-49, Asn-114, and Ser-191.

It belongs to the chalcone isomerase family. As to expression, mostly expressed in flowers, and, to a lower extent, in roots, shoots, and seeds.

The catalysed reaction is a chalcone = a flavanone.. It functions in the pathway secondary metabolite biosynthesis; flavonoid biosynthesis. In terms of biological role, catalyzes the intramolecular cyclization of bicyclic chalcones into tricyclic (S)-flavanones. Responsible for the isomerization of 4,2',4',6'-tetrahydroxychalcone (also termed chalcone) into naringenin. This Glycine max (Soybean) protein is Chalcone--flavanone isomerase 2-A (CHI2-A).